The sequence spans 314 residues: Ribosomal RNA small subunit methyltransferase H (314 aa).

Residues 36 to 38, Asp-56, Phe-83, Asp-104, and Gln-111 contribute to the S-adenosyl-L-methionine site; that span reads GGH.

The protein belongs to the methyltransferase superfamily. RsmH family.

It localises to the cytoplasm. It catalyses the reaction cytidine(1402) in 16S rRNA + S-adenosyl-L-methionine = N(4)-methylcytidine(1402) in 16S rRNA + S-adenosyl-L-homocysteine + H(+). Functionally, specifically methylates the N4 position of cytidine in position 1402 (C1402) of 16S rRNA. This chain is Ribosomal RNA small subunit methyltransferase H, found in Syntrophotalea carbinolica (strain DSM 2380 / NBRC 103641 / GraBd1) (Pelobacter carbinolicus).